We begin with the raw amino-acid sequence, 156 residues long: Lipoprotein signal peptidase (156 aa).

Helical transmembrane passes span 57–77 and 83–103; these read LFLI…LFIN and ILKI…IDRI. Residues aspartate 110 and aspartate 129 contribute to the active site. The chain crosses the membrane as a helical span at residues 124 to 144; sequence IFNIADVLVSLGTILLIIFII.

It belongs to the peptidase A8 family.

It is found in the cell membrane. It carries out the reaction Release of signal peptides from bacterial membrane prolipoproteins. Hydrolyzes -Xaa-Yaa-Zaa-|-(S,diacylglyceryl)Cys-, in which Xaa is hydrophobic (preferably Leu), and Yaa (Ala or Ser) and Zaa (Gly or Ala) have small, neutral side chains.. It functions in the pathway protein modification; lipoprotein biosynthesis (signal peptide cleavage). This protein specifically catalyzes the removal of signal peptides from prolipoproteins. The protein is Lipoprotein signal peptidase of Clostridium tetani (strain Massachusetts / E88).